The sequence spans 68 residues: Large ribosomal subunit protein bL31 (68 aa).

Positions 16, 18, 36, and 39 each coordinate Zn(2+).

Belongs to the bacterial ribosomal protein bL31 family. Type A subfamily. In terms of assembly, part of the 50S ribosomal subunit. Requires Zn(2+) as cofactor.

Functionally, binds the 23S rRNA. In Sorangium cellulosum (strain So ce56) (Polyangium cellulosum (strain So ce56)), this protein is Large ribosomal subunit protein bL31.